The primary structure comprises 860 residues: Leucine--tRNA ligase (860 aa).

The short motif at 42–52 (PYPSGRLHMGH) is the 'HIGH' region element. A 'KMSKS' region motif is present at residues 619-623 (KMSKS). Lysine 622 contributes to the ATP binding site.

Belongs to the class-I aminoacyl-tRNA synthetase family.

Its subcellular location is the cytoplasm. It catalyses the reaction tRNA(Leu) + L-leucine + ATP = L-leucyl-tRNA(Leu) + AMP + diphosphate. The polypeptide is Leucine--tRNA ligase (Salmonella typhimurium (strain LT2 / SGSC1412 / ATCC 700720)).